The sequence spans 483 residues: FAD-linked oxidoreductase easE (483 aa).

The FAD-binding PCMH-type domain occupies 10-193 (QGRLPFYSAV…TEATVRVFSD (184 aa)).

This sequence belongs to the oxygen-dependent FAD-linked oxidoreductase family. It depends on FAD as a cofactor.

The protein operates within alkaloid biosynthesis; ergot alkaloid biosynthesis. Functionally, FAD-linked oxidoreductase; part of the gene cluster that mediates the biosynthesis of fungal ergot alkaloid. DmaW catalyzes the first step of ergot alkaloid biosynthesis by condensing dimethylallyl diphosphate (DMAP) and tryptophan to form 4-dimethylallyl-L-tryptophan. The second step is catalyzed by the methyltransferase easF that methylates 4-dimethylallyl-L-tryptophan in the presence of S-adenosyl-L-methionine, resulting in the formation of 4-dimethylallyl-L-abrine. The catalase easC and the FAD-dependent oxidoreductase easE then transform 4-dimethylallyl-L-abrine to chanoclavine-I which is further oxidized by easD in the presence of NAD(+), resulting in the formation of chanoclavine-I aldehyde. Agroclavine dehydrogenase easG then mediates the conversion of chanoclavine-I aldehyde to agroclavine via a non-enzymatic adduct reaction: the substrate is an iminium intermediate that is formed spontaneously from chanoclavine-I aldehyde in the presence of glutathione. The presence of easA is not required to complete this reaction. Further conversion of agroclavine to paspalic acid is a two-step process involving oxidation of agroclavine to elymoclavine and of elymoclavine to paspalic acid, the second step being performed by the elymoclavine oxidase cloA. Paspalic acid is then further converted to D-lysergic acid. Ergopeptines are assembled from D-lysergic acid and three different amino acids by the D-lysergyl-peptide-synthetases composed each of a monomudular and a trimodular nonribosomal peptide synthetase subunit. LpsB and lpsC encode the monomodular subunits responsible for D-lysergic acid activation and incorporation into the ergopeptine backbone. LpsA1 and A2 subunits encode the trimodular nonribosomal peptide synthetase assembling the tripeptide portion of ergopeptines. LpsA1 is responsible for formation of the major ergopeptine, ergotamine, and lpsA2 for alpha-ergocryptine, the minor ergopeptine of the total alkaloid mixture elaborated by C.purpurea. D-lysergyl-tripeptides are assembled by the nonribosomal peptide synthetases and released as N-(D-lysergyl-aminoacyl)-lactams. Cyclolization of the D-lysergyl-tripeptides is performed by the Fe(2+)/2-ketoglutarate-dependent dioxygenase easH which introduces a hydroxyl group into N-(D-lysergyl-aminoacyl)-lactam at alpha-C of the aminoacyl residue followed by spontaneous condensation with the terminal lactam carbonyl group. The polypeptide is FAD-linked oxidoreductase easE (Claviceps purpurea (strain 20.1) (Ergot fungus)).